Consider the following 236-residue polypeptide: Methylosome subunit pICln (236 aa).

At Ser2 the chain carries N-acetylserine. Phosphoserine occurs at positions 95, 143, 192, 194, 197, and 209. Residues 134 to 158 (LHPDPEDEDSDDYDGEEYDVEAHEQ) form a disordered region. Residues 138 to 152 (PEDEDSDDYDGEEYD) show a composition bias toward acidic residues. The residue at position 222 (Thr222) is a Phosphothreonine.

Belongs to the pICln (TC 1.A.47) family. Component of the methylosome, a 20S complex containing at least PRMT5/SKB1, WDR77/MEP50 and CLNS1A/pICln. May mediate SNRPD1 and SNRPD3 methylation. Forms a 6S pICln-Sm complex composed of CLNS1A/pICln, SNRPD1, SNRPD2, SNRPE, SNRPF and SNRPG; ring-like structure where CLNS1A/pICln mimics additional Sm proteins and which is unable to assemble into the core snRNP. Interacts with LSM10 and LSM11. In terms of tissue distribution, expressed in most tissues.

It localises to the cytoplasm. The protein resides in the cytosol. Its subcellular location is the nucleus. It is found in the cytoskeleton. Involved in both the assembly of spliceosomal snRNPs and the methylation of Sm proteins. Chaperone that regulates the assembly of spliceosomal U1, U2, U4 and U5 small nuclear ribonucleoproteins (snRNPs), the building blocks of the spliceosome, and thereby plays an important role in the splicing of cellular pre-mRNAs. Most spliceosomal snRNPs contain a common set of Sm proteins SNRPB, SNRPD1, SNRPD2, SNRPD3, SNRPE, SNRPF and SNRPG that assemble in a heptameric protein ring on the Sm site of the small nuclear RNA to form the core snRNP (Sm core). In the cytosol, the Sm proteins SNRPD1, SNRPD2, SNRPE, SNRPF and SNRPG are trapped in an inactive 6S pICln-Sm complex by the chaperone CLNS1A that controls the assembly of the core snRNP. Dissociation by the SMN complex of CLNS1A from the trapped Sm proteins and their transfer to an SMN-Sm complex triggers the assembly of core snRNPs and their transport to the nucleus. The polypeptide is Methylosome subunit pICln (Clns1a) (Rattus norvegicus (Rat)).